We begin with the raw amino-acid sequence, 20 residues long: Pregnancy-associated glycoprotein 55h (20 aa).

An N-linked (GlcNAc...) asparagine glycan is attached at Asn4.

It belongs to the peptidase A1 family. Highly expressed in the placenta between day 60 and day 100 of gestation.

The protein resides in the secreted. It is found in the extracellular space. The chain is Pregnancy-associated glycoprotein 55h from Ovis aries (Sheep).